Consider the following 304-residue polypeptide: Protein UL24 homolog (304 aa).

The protein belongs to the HHV-1 UL24 protein family.

It localises to the host cytoplasm. The protein localises to the host nucleus. It is found in the host Golgi apparatus. Functionally, may play a role in the dispersal of host nucleolin from the nucleolus throughout the nucleus leading to a decrease in ribosome biogenesis. The sequence is that of Protein UL24 homolog (MDV035) from Gallid herpesvirus 2 (strain Chicken/Md5/ATCC VR-987) (GaHV-2).